The chain runs to 115 residues: NADH-ubiquinone oxidoreductase chain 3 (115 aa).

3 helical membrane-spanning segments follow: residues 3–23 (LFVALFINASLSFILISVAFW), 55–75 (FFLVAITFLLFDLEIALLLPL), and 84–104 (LSAMMITSFILISILALGLIY).

The protein belongs to the complex I subunit 3 family. In terms of assembly, core subunit of respiratory chain NADH dehydrogenase (Complex I) which is composed of 45 different subunits. Interacts with TMEM186. Interacts with TMEM242.

It is found in the mitochondrion inner membrane. It catalyses the reaction a ubiquinone + NADH + 5 H(+)(in) = a ubiquinol + NAD(+) + 4 H(+)(out). Functionally, core subunit of the mitochondrial membrane respiratory chain NADH dehydrogenase (Complex I) which catalyzes electron transfer from NADH through the respiratory chain, using ubiquinone as an electron acceptor. Essential for the catalytic activity of complex I. This is NADH-ubiquinone oxidoreductase chain 3 from Sigmodon hispidus (Hispid cotton rat).